Here is a 328-residue protein sequence, read N- to C-terminus: Probable ATP-dependent 6-phosphofructokinase (328 aa).

Residues G16, 77–78, and 107–110 contribute to the ATP site; these read RF and GDGS. D108 is a Mg(2+) binding site. Residues 130–132, R167, 174–176, E226, and 258–261 each bind substrate; these read TID, MGR, and HTQR. Catalysis depends on D132, which acts as the Proton acceptor.

This sequence belongs to the phosphofructokinase type A (PFKA) family. In terms of assembly, homotetramer. Requires Mg(2+) as cofactor.

The protein localises to the cytoplasm. It catalyses the reaction beta-D-fructose 6-phosphate + ATP = beta-D-fructose 1,6-bisphosphate + ADP + H(+). The protein operates within carbohydrate degradation; glycolysis; D-glyceraldehyde 3-phosphate and glycerone phosphate from D-glucose: step 3/4. Catalyzes the phosphorylation of D-fructose 6-phosphate to fructose 1,6-bisphosphate by ATP, the first committing step of glycolysis. In Mycoplasma pneumoniae (strain ATCC 29342 / M129 / Subtype 1) (Mycoplasmoides pneumoniae), this protein is Probable ATP-dependent 6-phosphofructokinase (pfkA).